A 255-amino-acid chain; its full sequence is Myogenic factor 5 (255 aa).

One can recognise a bHLH domain in the interval 83–134 (DRRKAATMRERRRLKKVNQAFDTLKRCTTTNPNQRLPKVEILRNAIRYIESL). A disordered region spans residues 217–249 (SEQPGLPLQDPASLSPVASTDSQPATPGASSSR). The span at 232 to 249 (PVASTDSQPATPGASSSR) shows a compositional bias: polar residues.

In terms of assembly, efficient DNA binding requires dimerization with another bHLH protein.

It localises to the nucleus. Functionally, acts as a transcriptional activator that promotes transcription of muscle-specific target genes and plays a role in muscle differentiation. Together with MYOG and MYOD1, co-occupies muscle-specific gene promoter core region during myogenesis. Induces fibroblasts to differentiate into myoblasts. Probable sequence specific DNA-binding protein. The polypeptide is Myogenic factor 5 (MYF5) (Bos taurus (Bovine)).